Consider the following 117-residue polypeptide: MAFLMSEFIGLGLAGAGVLSNALLRRQELQLQKQAMENGLVLKADQLGRLGFNPNEVKNVIVGNSFSSNVRLSNMHNDASVVNAYNVYNPASNGIRKKIKSLNNSVKIYNTTGESSV.

Belongs to the lagovirus VP2 protein family. As to quaternary structure, homooligomer. The portal-like structure consists in 12 copies of VP2. Interacts with capsid protein VP1.

It localises to the virion. It is found in the host cytoplasm. In terms of biological role, minor structural protein that forms a portal-like structure at a unique three-fold axis of symmetry, following binding to the host receptor. The channel formed by VP2 may allow the delivery of the viral genome through the host endosomal membrane. The sequence is that of Minor capsid protein VP2 from Oryctolagus cuniculus (Rabbit).